The chain runs to 249 residues: Tumor necrosis factor receptor superfamily member 13B (249 aa).

Topologically, residues 1–128 (MAMAFCPKDQ…LSSDQLTLYC (128 aa)) are extracellular. TNFR-Cys repeat units lie at residues 5–38 (FCPK…TDFC) and 42–76 (NCRK…AHFC). Disulfide bonds link Cys-6–Cys-19, Cys-22–Cys-34, Cys-26–Cys-38, Cys-43–Cys-58, Cys-61–Cys-72, and Cys-65–Cys-76. The segment at 86-116 (LQPELGRPQAGEVEVRSDNSGRHQGSEHGPG) is disordered. Positions 98-111 (VEVRSDNSGRHQGS) are enriched in basic and acidic residues. The chain crosses the membrane as a helical; Signal-anchor for type III membrane protein span at residues 129–149 (TLGVCLCAIFCCFLVALASFL). The Cytoplasmic segment spans residues 150-249 (RRRGEPLPSQ…ASTGDARPAT (100 aa)). Residues 156 to 176 (LPSQPAGPRGSQANSPHAHRP) form a disordered region.

As to quaternary structure, binds TRAF2, TRAF5 and TRAF6. Binds the NH2-terminal domain of CAMLG with its C-terminus.

Its subcellular location is the membrane. Receptor for TNFSF13/APRIL and TNFSF13B/TALL1/BAFF/BLYS that binds both ligands with similar high affinity. Mediates calcineurin-dependent activation of NF-AT, as well as activation of NF-kappa-B and AP-1. Involved in the stimulation of B- and T-cell function and the regulation of humoral immunity. The chain is Tumor necrosis factor receptor superfamily member 13B (Tnfrsf13b) from Mus musculus (Mouse).